Consider the following 134-residue polypeptide: DNA-binding protein H-NS homolog (134 aa).

The segment at 106–134 (HKTWTGQGRTPRPIQNALNKGKSLSDFEI) is disordered. Residues 112–117 (QGRTPR) mediate DNA binding.

It belongs to the histone-like protein H-NS family. In terms of assembly, homodimer that oligomerizes on DNA into higher-order complexes that form bridges between disparate regions of DNA compacting it.

Its subcellular location is the cytoplasm. The protein localises to the nucleoid. Functionally, a DNA-binding protein implicated in transcriptional repression and chromosome organization and compaction. Binds nucleation sites in AT-rich DNA and bridges them, forming higher-order nucleoprotein complexes and condensing the chromosome. As many horizontally transferred genes are AT-rich, it plays a central role in silencing foreign genes. A subset of genes are repressed by H-NS in association with other proteins. The chain is DNA-binding protein H-NS homolog (hns) from Haemophilus influenzae (strain ATCC 51907 / DSM 11121 / KW20 / Rd).